The chain runs to 308 residues: Methionyl-tRNA formyltransferase (308 aa).

109-112 (SLLP) is a (6S)-5,6,7,8-tetrahydrofolate binding site.

This sequence belongs to the Fmt family.

The catalysed reaction is L-methionyl-tRNA(fMet) + (6R)-10-formyltetrahydrofolate = N-formyl-L-methionyl-tRNA(fMet) + (6S)-5,6,7,8-tetrahydrofolate + H(+). Attaches a formyl group to the free amino group of methionyl-tRNA(fMet). The formyl group appears to play a dual role in the initiator identity of N-formylmethionyl-tRNA by promoting its recognition by IF2 and preventing the misappropriation of this tRNA by the elongation apparatus. This chain is Methionyl-tRNA formyltransferase, found in Clostridium beijerinckii (strain ATCC 51743 / NCIMB 8052) (Clostridium acetobutylicum).